The following is a 463-amino-acid chain: 23S rRNA (uracil(1939)-C(5))-methyltransferase RlmD (463 aa).

The 71-residue stretch at 6–76 (KSRKPQQPEY…KRLEEAEMVE (71 aa)) folds into the TRAM domain. The [4Fe-4S] cluster site is built by Cys90, Cys96, Cys99, and Cys178. Residues Gln288, Phe317, Asn322, Glu341, Asp368, and Asp389 each contribute to the S-adenosyl-L-methionine site. Cys415 serves as the catalytic Nucleophile.

It belongs to the class I-like SAM-binding methyltransferase superfamily. RNA M5U methyltransferase family. RlmD subfamily.

It carries out the reaction uridine(1939) in 23S rRNA + S-adenosyl-L-methionine = 5-methyluridine(1939) in 23S rRNA + S-adenosyl-L-homocysteine + H(+). Catalyzes the formation of 5-methyl-uridine at position 1939 (m5U1939) in 23S rRNA. The protein is 23S rRNA (uracil(1939)-C(5))-methyltransferase RlmD of Acinetobacter baumannii (strain AYE).